The following is a 307-amino-acid chain: Coenzyme PQQ synthesis protein B (307 aa).

Belongs to the PqqB family.

It functions in the pathway cofactor biosynthesis; pyrroloquinoline quinone biosynthesis. Functionally, may be involved in the transport of PQQ or its precursor to the periplasm. In Gluconacetobacter diazotrophicus (strain ATCC 49037 / DSM 5601 / CCUG 37298 / CIP 103539 / LMG 7603 / PAl5), this protein is Coenzyme PQQ synthesis protein B.